Reading from the N-terminus, the 141-residue chain is Hemoglobin subunit alpha (141 aa).

The Globin domain maps to valine 1 to arginine 141. The residue at position 3 (serine 3) is a Phosphoserine. Lysine 7 is subject to N6-succinyllysine. Threonine 8 carries the post-translational modification Phosphothreonine. N6-succinyllysine is present on lysine 11. Position 16 is an N6-acetyllysine; alternate (lysine 16). N6-succinyllysine; alternate is present on lysine 16. Tyrosine 24 carries the phosphotyrosine modification. At serine 35 the chain carries Phosphoserine. Lysine 40 is modified (N6-succinyllysine). Residue serine 49 is modified to Phosphoserine. Residue histidine 58 participates in O2 binding. Histidine 87 contacts heme b. The residue at position 102 (serine 102) is a Phosphoserine. Residue threonine 108 is modified to Phosphothreonine. Phosphoserine is present on residues serine 124 and serine 131. 2 positions are modified to phosphothreonine: threonine 134 and threonine 137. Position 138 is a phosphoserine (serine 138).

Belongs to the globin family. Heterotetramer of two alpha chains and two beta chains. As to expression, red blood cells.

In terms of biological role, involved in oxygen transport from the lung to the various peripheral tissues. Functionally, hemopressin acts as an antagonist peptide of the cannabinoid receptor CNR1. Hemopressin-binding efficiently blocks cannabinoid receptor CNR1 and subsequent signaling. The polypeptide is Hemoglobin subunit alpha (HBA) (Trichechus inunguis (Amazon manatee)).